Reading from the N-terminus, the 430-residue chain is Cell wall protein ECM33 (430 aa).

A signal peptide spans 1–19; it reads MQFKNALTATAILSASALA. N-linked (GlcNAc...) asparagine glycosylation is found at Asn-22, Asn-57, Asn-83, Asn-197, Asn-210, Asn-228, Asn-235, Asn-242, Asn-268, Asn-280, Asn-305, and Asn-329. Ser-340 is modified (phosphoserine). Residues 362-402 show a composition bias toward low complexity; that stretch reads LSSTSTESSKSSATSSASSSGDASNAQASVSASASSSSSSS. The disordered stretch occupies residues 362 to 411; that stretch reads LSSTSTESSKSSATSSASSSGDASNAQASVSASASSSSSSSKKSKGAAPE. The GPI-anchor amidated glycine moiety is linked to residue Gly-407. The propeptide at 408–430 is removed in mature form; that stretch reads AAPELVPATSFMGVVAAVAVALL.

Belongs to the SPS2 family. The GPI-anchor is attached to the protein in the endoplasmic reticulum and serves to target the protein to the cell surface. There, the glucosamine-inositol phospholipid moiety is cleaved off and the GPI-modified mannoprotein is covalently attached via its lipidless GPI glycan remnant to the 1,6-beta-glucan of the outer cell wall layer.

It localises to the cell membrane. The protein resides in the secreted. It is found in the cell wall. In terms of biological role, required for proper cell wall integrity and for the correct assembly of the mannoprotein outer layer of the cell wall. Important for apical bud growth. The polypeptide is Cell wall protein ECM33 (ECM33) (Saccharomyces cerevisiae (strain JAY291) (Baker's yeast)).